We begin with the raw amino-acid sequence, 94 residues long: uncharacterized protein (94 aa).

Residues 33–42 (INSLPTFTKP) show a composition bias toward polar residues. The segment at 33 to 57 (INSLPTFTKPNDSNNNVNKSSNDGV) is disordered. The segment covering 43-57 (NDSNNNVNKSSNDGV) has biased composition (low complexity).

This is an uncharacterized protein from Dictyostelium discoideum (Social amoeba).